A 1364-amino-acid polypeptide reads, in one-letter code: ABC-type transporter cns4 (1364 aa).

Residues 42–290 (SRVKESRAKP…MEEMGFLYTD (249 aa)) enclose the ABC transporter 1 domain. N-linked (GlcNAc...) asparagine glycosylation is found at asparagine 152 and asparagine 214. The next 5 membrane-spanning stretches (helical) occupy residues 435–455 (LFFAVLLNALLSMSEVTGSFA), 483–503 (IPLIAMQVTLFALPVYWMTGL), 508–528 (EAFLTYWIITISVTMCMTALF), 540–560 (AAIKVTGFLMSALIMYTGFLI), and 567–587 (PWLGWIFWINPLAYGYEAVLS). The N-linked (GlcNAc...) asparagine glycan is linked to asparagine 610. The chain crosses the membrane as a helical span at residues 650–670 (FAIVWVWWALFVILTVYFTSN). Residues asparagine 689, asparagine 711, and asparagine 739 are each glycosylated (N-linked (GlcNAc...) asparagine). Residues 697–732 (DEEVGSGPDSHDSRNRSGISPIGDKQETSTDGPSKI) form a disordered region. The 249-residue stretch at 737 to 985 (IRNTSVFTWK…TVNEYFGRNG (249 aa)) folds into the ABC transporter 2 domain. ATP is bound at residue 779–786 (GSSGAGKT). 6 consecutive transmembrane segments (helical) span residues 1076-1094 (LMLHITSGLLNGFSFWKIG), 1105-1125 (FTIFNFIFVAPGVIAQLQPLF), 1146-1166 (AFATGLIVSELPYLVVCAVVY), 1185-1205 (AVFFVVLMYEFIYTGIGQAIA), 1211-1231 (AIFAVLINPLIIAILVFFCGV), and 1245-1265 (WLYYLDPFNYLMGSLLIFTTF).

Belongs to the ABC transporter superfamily. ABCG family. PDR (TC 3.A.1.205) subfamily.

Its subcellular location is the cell membrane. ABC-type transporter; part of the gene cluster that mediates the biosynthesis of cordycepin (COR) and pentostatin (PTN), two adenosine analogs with related bioactivity profiles as both mimic adenosine and can inhibit some of the processes that are adenosine dependent. Mediates the pumping of pentostatin but not of cordycepin out of fungal cells. Decreasing intracellular pentostatin releases adenosine deaminase (ADA) inhibition, allowing ADA to deaminate cordycepin into non-toxic 3'-d. The chain is ABC-type transporter cns4 from Cordyceps militaris (strain CM01) (Caterpillar fungus).